We begin with the raw amino-acid sequence, 463 residues long: Putative dipeptidase YtjP (463 aa).

A Zn(2+)-binding site is contributed by His-85. Asp-87 is a catalytic residue. Asp-116 contributes to the Zn(2+) binding site. Catalysis depends on Glu-150, which acts as the Proton acceptor. Glu-151, Asp-174, and His-436 together coordinate Zn(2+).

It belongs to the peptidase M20A family. It depends on Zn(2+) as a cofactor.

The sequence is that of Putative dipeptidase YtjP (ytjP) from Bacillus subtilis (strain 168).